A 251-amino-acid chain; its full sequence is CDP-diacylglycerol pyrophosphatase (251 aa).

A helical membrane pass occupies residues 4 to 24 (AGLLFLVMIVIAVVAAGIGYW).

This sequence belongs to the Cdh family.

It localises to the cell inner membrane. The catalysed reaction is a CDP-1,2-diacyl-sn-glycerol + H2O = a 1,2-diacyl-sn-glycero-3-phosphate + CMP + 2 H(+). Its pathway is phospholipid metabolism; CDP-diacylglycerol degradation; phosphatidate from CDP-diacylglycerol: step 1/1. This chain is CDP-diacylglycerol pyrophosphatase, found in Shigella flexneri.